The primary structure comprises 672 residues: Tubulin--tyrosine ligase-like protein 12 (672 aa).

Residues 332 to 670 (KIKIFLQIFA…LDEIDPTKVT (339 aa)) enclose the TTL domain. ATP contacts are provided by residues 480-483 (CEYI), lysine 499, and aspartate 501.

The protein belongs to the tubulin--tyrosine ligase family.

In terms of biological role, regulates microtubule dynamics in uterine muscle cells. The polypeptide is Tubulin--tyrosine ligase-like protein 12 (Caenorhabditis briggsae).